Here is a 293-residue protein sequence, read N- to C-terminus: Cytidine deaminase (293 aa).

CMP/dCMP-type deaminase domains lie at 47 to 166 (EDRA…FGPA) and 186 to 293 (ESED…YQAV). Position 88–90 (88–90 (NME)) interacts with substrate. Residue histidine 101 coordinates Zn(2+). Residue glutamate 103 is the Proton donor of the active site. Zn(2+) is bound by residues cysteine 128 and cysteine 131.

It belongs to the cytidine and deoxycytidylate deaminase family. In terms of assembly, homodimer. Zn(2+) is required as a cofactor.

It catalyses the reaction cytidine + H2O + H(+) = uridine + NH4(+). The catalysed reaction is 2'-deoxycytidine + H2O + H(+) = 2'-deoxyuridine + NH4(+). Functionally, this enzyme scavenges exogenous and endogenous cytidine and 2'-deoxycytidine for UMP synthesis. In Aeromonas salmonicida (strain A449), this protein is Cytidine deaminase.